A 376-amino-acid chain; its full sequence is Inactive 2'-5'-oligoadenylate synthase 1B (376 aa).

The Cytoplasmic portion of the chain corresponds to 1–351; it reads MEQDLRSIPA…VPTEVGVPMK (351 aa). Residues 352 to 370 form a helical; Anchor for type IV membrane protein membrane-spanning segment; sequence YLLCRIFWLLFWSLFHFIF. At 371–376 the chain is on the extracellular side; it reads GKTSSG.

The protein belongs to the 2-5A synthase family. As to quaternary structure, interacts with OSBPL1A and ABCF3. In terms of tissue distribution, highly expressed in lung, spleen and thymus. Also detected at lower levels in heart, kidney, liver, lung, skeletal muscle, testes, uterus and ovaries.

It localises to the endoplasmic reticulum membrane. Its function is as follows. Does not have 2'-5'-OAS activity, but can bind double-stranded RNA. The full-length protein displays antiviral activity against flaviviruses such as west Nile virus (WNV) via an alternative antiviral pathway independent of RNase L. The truncated form of the protein lacks antiviral activity. The chain is Inactive 2'-5'-oligoadenylate synthase 1B (Oas1b) from Mus musculus (Mouse).